A 338-amino-acid chain; its full sequence is SPbeta prophage-derived uncharacterized protein YonB (338 aa).

The protein is SPbeta prophage-derived uncharacterized protein YonB (yonB) of Bacillus subtilis (strain 168).